A 127-amino-acid chain; its full sequence is Small ribosomal subunit protein uS11 (127 aa).

The protein belongs to the universal ribosomal protein uS11 family. Part of the 30S ribosomal subunit. Interacts with proteins S7 and S18. Binds to IF-3.

In terms of biological role, located on the platform of the 30S subunit, it bridges several disparate RNA helices of the 16S rRNA. Forms part of the Shine-Dalgarno cleft in the 70S ribosome. The chain is Small ribosomal subunit protein uS11 from Rickettsia africae (strain ESF-5).